Consider the following 841-residue polypeptide: Replication origin-binding protein (841 aa).

The 166-residue stretch at 45-210 folds into the Helicase ATP-binding domain; the sequence is PLYPRTRNVL…AIMRGEENIH (166 aa). Position 58–65 (58–65) interacts with ATP; that stretch reads APMGSGKT.

Belongs to the herpesviridae OriBP family. As to quaternary structure, homodimer. Interacts with the major DNA-binding protein. Interacts with the DNA helicase/primase complex-associated protein and the polymerase accessory protein.

The protein resides in the host nucleus. Functions as a docking protein to recruit essential components of the viral replication machinery to viral DNA origins. In the presence of the major DNA-binding protein, opens dsDNA leading to a conformational change in the origin that facilitates DNA unwinding and subsequent replication. The chain is Replication origin-binding protein (MDV021) from Gallid herpesvirus 2 (strain Chicken/Md5/ATCC VR-987) (GaHV-2).